Consider the following 365-residue polypeptide: MSHNTFGHLFRVTTWGESHGPALGCVVDGCPPGLRFKLEDLQVWLDKRKPGQSRFVTQRREDDLVKVLSGVMLDADGETMTTTGTPISMLIENTDQRSKDYGEIARQFRPGHADYTYDLKYGIRDYRGGGRSSARETAARVAAGGIARLVVPGVTVRGALVQIGKHKIDRRAWDWDQVGQNPFFSPDAAIVPVWEEYLDGIRKNGSSIGAVVEVIAEGVPAGLGAPIYSKLDQDIASLLMSINAVKGVEIGNGFAAAETSGEDNADEMRMGNDGVPIFLSNNAGGILGGISTGQPVVARFAVKPTSSILTERQSIDADGKNVDVRTKGRHDPCVGIRAVPIGEAMVACAIADHYLRDRGQTGRLK.

Positions 48 and 54 each coordinate NADP(+). FMN-binding positions include 131-133 (RSS), 243-244 (NA), Gly-288, 303-307 (KPTSS), and Arg-329.

This sequence belongs to the chorismate synthase family. As to quaternary structure, homotetramer. FMNH2 is required as a cofactor.

The enzyme catalyses 5-O-(1-carboxyvinyl)-3-phosphoshikimate = chorismate + phosphate. It participates in metabolic intermediate biosynthesis; chorismate biosynthesis; chorismate from D-erythrose 4-phosphate and phosphoenolpyruvate: step 7/7. In terms of biological role, catalyzes the anti-1,4-elimination of the C-3 phosphate and the C-6 proR hydrogen from 5-enolpyruvylshikimate-3-phosphate (EPSP) to yield chorismate, which is the branch point compound that serves as the starting substrate for the three terminal pathways of aromatic amino acid biosynthesis. This reaction introduces a second double bond into the aromatic ring system. In Rhizobium leguminosarum bv. trifolii (strain WSM2304), this protein is Chorismate synthase.